Reading from the N-terminus, the 949-residue chain is Nonsense-mediated mRNA decay factor SMG8 (949 aa).

3 disordered regions span residues 564 to 607 (SGAR…LSPT), 624 to 652 (NESQASSEQLSNSEQNTSSSGTSSADTEN), and 748 to 768 (PKQQHHTHHQQQHPGKKQQRW). The segment covering 571-581 (EGDDEPEDEVV) has biased composition (acidic residues). Positions 594 to 607 (NTASNGCSQPLSPT) are enriched in polar residues. Over residues 624-648 (NESQASSEQLSNSEQNTSSSGTSSA) the composition is skewed to low complexity. Residues 749–768 (KQQHHTHHQQQHPGKKQQRW) show a composition bias toward basic residues.

The protein belongs to the SMG8 family.

In terms of biological role, involved in nonsense-mediated decay (NMD) of mRNAs containing premature stop codons. Probable component of kinase complex containing nonC and recruited to stalled ribosomes. This is Nonsense-mediated mRNA decay factor SMG8 from Drosophila erecta (Fruit fly).